The primary structure comprises 146 residues: Ribosome maturation factor RimP (146 aa).

Belongs to the RimP family.

The protein resides in the cytoplasm. Functionally, required for maturation of 30S ribosomal subunits. This is Ribosome maturation factor RimP from Helicobacter pylori (strain Shi470).